Reading from the N-terminus, the 103-residue chain is Stefin-3 (103 aa).

The short motif at 52-56 is the Secondary area of contact element; the sequence is QVVAG.

This sequence belongs to the cystatin family.

It localises to the cytoplasm. This is an intracellular thiol proteinase inhibitor. The sequence is that of Stefin-3 (Stfa3) from Mus musculus (Mouse).